Here is a 363-residue protein sequence, read N- to C-terminus: NADH-quinone oxidoreductase subunit H (363 aa).

10 consecutive transmembrane segments (helical) span residues 29–49, 62–82, 96–116, 127–147, 163–183, 202–222, 239–257, 264–286, 299–319, and 339–359; these read VLKILLIAVPVIVTVAFYVVW, GPMYVGMGIFQAFADVFKLLF, FIIAPLLTLAPAFAAWSVVPF, VGLLYLLAMTSLGVYGIILAG, AAQVVSYEIAMGFALVGVMIA, FFDWFLIPLFPLFIVYWVSGV, IVAGHMVEYSGGAFALFFL, ILVSFLISIFFLGGWLSPIQGWV, TGGWPWLLMKVFFFASAYIWF, and FIPLTIVWIAVTALMVFYGVI.

The protein belongs to the complex I subunit 1 family. In terms of assembly, NDH-1 is composed of 14 different subunits. Subunits NuoA, H, J, K, L, M, N constitute the membrane sector of the complex.

The protein resides in the cell inner membrane. The catalysed reaction is a quinone + NADH + 5 H(+)(in) = a quinol + NAD(+) + 4 H(+)(out). NDH-1 shuttles electrons from NADH, via FMN and iron-sulfur (Fe-S) centers, to quinones in the respiratory chain. The immediate electron acceptor for the enzyme in this species is believed to be ubiquinone. Couples the redox reaction to proton translocation (for every two electrons transferred, four hydrogen ions are translocated across the cytoplasmic membrane), and thus conserves the redox energy in a proton gradient. This subunit may bind ubiquinone. This is NADH-quinone oxidoreductase subunit H from Xanthomonas campestris pv. campestris (strain B100).